Here is a 385-residue protein sequence, read N- to C-terminus: tRNA N6-adenosine threonylcarbamoyltransferase (385 aa).

Positions 140, 144, and 161 each coordinate a divalent metal cation. Substrate-binding positions include 161–165, D193, G208, E212, and N314; that span reads YVSGG. D343 is an a divalent metal cation binding site.

The protein belongs to the KAE1 / TsaD family. In terms of assembly, component of the EKC/KEOPS complex composed of at least BUD32, CGI121, GON7, KAE1 and PCC1; the whole complex dimerizes. A divalent metal cation is required as a cofactor.

It localises to the cytoplasm. It is found in the nucleus. The enzyme catalyses L-threonylcarbamoyladenylate + adenosine(37) in tRNA = N(6)-L-threonylcarbamoyladenosine(37) in tRNA + AMP + H(+). Functionally, component of the EKC/KEOPS complex that is required for the formation of a threonylcarbamoyl group on adenosine at position 37 (t(6)A37) in tRNAs that read codons beginning with adenine. The complex is probably involved in the transfer of the threonylcarbamoyl moiety of threonylcarbamoyl-AMP (TC-AMP) to the N6 group of A37. KAE1 likely plays a direct catalytic role in this reaction, but requires other protein(s) of the complex to fulfill this activity. The EKC/KEOPS complex also promotes both telomere uncapping and telomere elongation. The complex is required for efficient recruitment of transcriptional coactivators. The sequence is that of tRNA N6-adenosine threonylcarbamoyltransferase from Eremothecium gossypii (strain ATCC 10895 / CBS 109.51 / FGSC 9923 / NRRL Y-1056) (Yeast).